We begin with the raw amino-acid sequence, 331 residues long: Glyoxylate reductase (331 aa).

Residues 158 to 161 (FGRI), 180 to 182 (SRT), and 239 to 241 (TSR) contribute to the NADP(+) site. Residues Arg241 and Glu270 contribute to the active site. His288 acts as the Proton donor in catalysis. 288–290 (HIG) lines the NADP(+) pocket.

This sequence belongs to the D-isomer specific 2-hydroxyacid dehydrogenase family. GyaR subfamily. In terms of assembly, homodimer.

The protein resides in the cytoplasm. The catalysed reaction is glycolate + NAD(+) = glyoxylate + NADH + H(+). This is Glyoxylate reductase from Thermococcus litoralis (strain ATCC 51850 / DSM 5473 / JCM 8560 / NS-C).